A 591-amino-acid chain; its full sequence is Aspartate--tRNA ligase (591 aa).

Glu-172 serves as a coordination point for L-aspartate. Residues 196–199 (QLFK) form an aspartate region. Arg-218 serves as a coordination point for L-aspartate. ATP contacts are provided by residues 218–220 (RDE) and Gln-227. His-449 serves as a coordination point for L-aspartate. Residue Glu-483 participates in ATP binding. An L-aspartate-binding site is contributed by Arg-490. ATP is bound at residue 535–538 (GLDR).

Belongs to the class-II aminoacyl-tRNA synthetase family. Type 1 subfamily. As to quaternary structure, homodimer.

It localises to the cytoplasm. It catalyses the reaction tRNA(Asp) + L-aspartate + ATP = L-aspartyl-tRNA(Asp) + AMP + diphosphate. Catalyzes the attachment of L-aspartate to tRNA(Asp) in a two-step reaction: L-aspartate is first activated by ATP to form Asp-AMP and then transferred to the acceptor end of tRNA(Asp). The chain is Aspartate--tRNA ligase from Actinobacillus pleuropneumoniae serotype 5b (strain L20).